Reading from the N-terminus, the 304-residue chain is Undecaprenyl-diphosphatase (304 aa).

A run of 8 helical transmembrane segments spans residues 5–25 (FLFILKALIIAIVEGLTEFVP), 47–67 (GFPEMYEVVIQLGAILAVVVL), 72–92 (ISSSVVEFLSYIFSFIGLKTS), 111–131 (FGINVIIGTIPAAILGLLFHD), 137–157 (LFSTKTVAIGFIVGGILLIVI), 209–231 (ISGLSTTVATEFTFFLAIPAMVG), 248–268 (TNWISLILGFIVAFIVSLVVI), and 283–303 (FAIYRVFAGIVLAILIFTKVI).

The protein belongs to the UppP family.

The protein resides in the cell membrane. The enzyme catalyses di-trans,octa-cis-undecaprenyl diphosphate + H2O = di-trans,octa-cis-undecaprenyl phosphate + phosphate + H(+). In terms of biological role, catalyzes the dephosphorylation of undecaprenyl diphosphate (UPP). Confers resistance to bacitracin. This Clostridium perfringens (strain 13 / Type A) protein is Undecaprenyl-diphosphatase.